We begin with the raw amino-acid sequence, 453 residues long: Bifunctional protein GlmU (453 aa).

Positions 1–226 (MKFSAVILAA…PIEVEGVNDR (226 aa)) are pyrophosphorylase. Residues 8–11 (LAAG), Lys22, Gln73, 78–79 (GT), 100–102 (YGD), Gly137, Glu151, Asn166, and Asn224 contribute to the UDP-N-acetyl-alpha-D-glucosamine site. Asp102 contacts Mg(2+). Mg(2+) is bound at residue Asn224. The segment at 227-247 (AQLARLERAFQAAQAKKLLEQ) is linker. Residues 248–453 (GVMLRDPARF…TGWQRPVKKK (206 aa)) are N-acetyltransferase. Positions 330 and 348 each coordinate UDP-N-acetyl-alpha-D-glucosamine. His360 (proton acceptor) is an active-site residue. Positions 363 and 374 each coordinate UDP-N-acetyl-alpha-D-glucosamine. Residues Ala377, 383–384 (NY), Ser402, Ala420, and Arg437 contribute to the acetyl-CoA site.

The protein in the N-terminal section; belongs to the N-acetylglucosamine-1-phosphate uridyltransferase family. It in the C-terminal section; belongs to the transferase hexapeptide repeat family. Homotrimer. Requires Mg(2+) as cofactor.

The protein resides in the cytoplasm. The enzyme catalyses alpha-D-glucosamine 1-phosphate + acetyl-CoA = N-acetyl-alpha-D-glucosamine 1-phosphate + CoA + H(+). It catalyses the reaction N-acetyl-alpha-D-glucosamine 1-phosphate + UTP + H(+) = UDP-N-acetyl-alpha-D-glucosamine + diphosphate. The protein operates within nucleotide-sugar biosynthesis; UDP-N-acetyl-alpha-D-glucosamine biosynthesis; N-acetyl-alpha-D-glucosamine 1-phosphate from alpha-D-glucosamine 6-phosphate (route II): step 2/2. It functions in the pathway nucleotide-sugar biosynthesis; UDP-N-acetyl-alpha-D-glucosamine biosynthesis; UDP-N-acetyl-alpha-D-glucosamine from N-acetyl-alpha-D-glucosamine 1-phosphate: step 1/1. Its pathway is bacterial outer membrane biogenesis; LPS lipid A biosynthesis. Its function is as follows. Catalyzes the last two sequential reactions in the de novo biosynthetic pathway for UDP-N-acetylglucosamine (UDP-GlcNAc). The C-terminal domain catalyzes the transfer of acetyl group from acetyl coenzyme A to glucosamine-1-phosphate (GlcN-1-P) to produce N-acetylglucosamine-1-phosphate (GlcNAc-1-P), which is converted into UDP-GlcNAc by the transfer of uridine 5-monophosphate (from uridine 5-triphosphate), a reaction catalyzed by the N-terminal domain. This chain is Bifunctional protein GlmU, found in Vibrio vulnificus (strain CMCP6).